A 345-amino-acid polypeptide reads, in one-letter code: UDP-3-O-acylglucosamine N-acyltransferase 3 (345 aa).

The Proton acceptor role is filled by H236.

This sequence belongs to the transferase hexapeptide repeat family. LpxD subfamily. As to quaternary structure, homotrimer.

The catalysed reaction is a UDP-3-O-[(3R)-3-hydroxyacyl]-alpha-D-glucosamine + a (3R)-hydroxyacyl-[ACP] = a UDP-2-N,3-O-bis[(3R)-3-hydroxyacyl]-alpha-D-glucosamine + holo-[ACP] + H(+). It participates in bacterial outer membrane biogenesis; LPS lipid A biosynthesis. Its function is as follows. Catalyzes the N-acylation of UDP-3-O-acylglucosamine using 3-hydroxyacyl-ACP as the acyl donor. Is involved in the biosynthesis of lipid A, a phosphorylated glycolipid that anchors the lipopolysaccharide to the outer membrane of the cell. This chain is UDP-3-O-acylglucosamine N-acyltransferase 3, found in Gloeobacter violaceus (strain ATCC 29082 / PCC 7421).